We begin with the raw amino-acid sequence, 417 residues long: Caveolae-associated protein 2 (417 aa).

Positions 1–42 are disordered; sequence MGEDAAQAEKFQHPNTDMLQEKPSNPSPMPSSTPSPSLNLGS. Gly-2 carries the N-acetylglycine modification. The segment at 2-168 is interaction with CAVIN1; the sequence is GEDAAQAEKF…IFQEESEIPA (167 aa). Ser-27, Ser-35, Ser-37, and Ser-51 each carry phosphoserine. 2 coiled-coil regions span residues 61–87 and 126–267; these read LLDKLVNMLDAVRENQHNMEQRQINLE and RAVR…VERR. A leucine-zipper region spans residues 62-100; that stretch reads LDKLVNMLDAVRENQHNMEQRQINLEGSVKGIQNDLTKL. Thr-195 is subject to Phosphothreonine. Disordered regions lie at residues 198–242 and 256–381; these read NVDL…DSLK and KLGT…ALQQ. Phosphoserine occurs at positions 202, 203, and 217. The span at 202 to 218 shows a compositional bias: acidic residues; it reads SSDDELPGDEEALEDSA. Positions 219–242 are enriched in basic and acidic residues; sequence EEKMEESRAEKIKRSSLKKVDSLK. The segment covering 274–286 has biased composition (polar residues); sequence LTPNHQKASSGKS. Residues Ser-282, Ser-283, Ser-286, Ser-287, Ser-292, and Ser-295 each carry the phosphoserine modification. Basic and acidic residues predominate over residues 302 to 320; the sequence is REGESSAENETKLEEQVQD. Residues Ser-326, Ser-335, Ser-358, and Ser-362 each carry the phosphoserine modification. Polar residues predominate over residues 354–365; it reads RGNNSGVGSNAD. At Thr-367 the chain carries Phosphothreonine. Positions 367 to 376 are enriched in acidic residues; sequence TIEEDEEEES. Tyr-387 is subject to Phosphotyrosine. Phosphoserine is present on residues Ser-389 and Ser-395.

This sequence belongs to the CAVIN family. In terms of assembly, component of the CAVIN complex composed of CAVIN1, CAVIN2, CAVIN3 and CAVIN. Interacts with CAVIN4; this augments the transactivation of NPPA by CAVIN4. Binds to PRKCA in the presence of phosphatidylserine. Interacts with CAVIN1 and CAV3. Post-translationally, the N-terminus is blocked. In terms of processing, phosphorylated on Ser residues.

It localises to the cytoplasm. Its subcellular location is the cytosol. The protein resides in the membrane. It is found in the caveola. Its function is as follows. Plays an important role in caveolar biogenesis and morphology. Regulates caveolae morphology by inducing membrane curvature within caveolae. Plays a role in caveola formation in a tissue-specific manner. Required for the formation of caveolae in the lung and fat endothelia but not in the heart endothelia. Negatively regulates the size or stability of CAVIN complexes in the lung endothelial cells. May play a role in targeting PRKCA to caveolae. In Rattus norvegicus (Rat), this protein is Caveolae-associated protein 2.